The following is a 542-amino-acid chain: CTP synthase (542 aa).

Residues 1–265 are amidoligase domain; the sequence is MTRFIFITGG…DTQVLKFFGM (265 aa). Position 13 (serine 13) interacts with CTP. Serine 13 is a UTP binding site. Residue 14–19 coordinates ATP; that stretch reads SLGKGL. Residue tyrosine 54 coordinates L-glutamine. Position 71 (aspartate 71) interacts with ATP. The Mg(2+) site is built by aspartate 71 and glutamate 139. CTP is bound by residues 146 to 148, 186 to 191, and lysine 222; these read DIE and KTKPTQ. UTP-binding positions include 186-191 and lysine 222; that span reads KTKPTQ. The Glutamine amidotransferase type-1 domain maps to 291–541; sequence TIAVVGKYTS…IRAAIEQSRL (251 aa). Glycine 353 is a binding site for L-glutamine. The active-site Nucleophile; for glutamine hydrolysis is cysteine 380. L-glutamine contacts are provided by residues 381–384, glutamate 404, and arginine 469; that span reads FGMQ. Residues histidine 514 and glutamate 516 contribute to the active site.

The protein belongs to the CTP synthase family. In terms of assembly, homotetramer.

The enzyme catalyses UTP + L-glutamine + ATP + H2O = CTP + L-glutamate + ADP + phosphate + 2 H(+). It carries out the reaction L-glutamine + H2O = L-glutamate + NH4(+). It catalyses the reaction UTP + NH4(+) + ATP = CTP + ADP + phosphate + 2 H(+). It participates in pyrimidine metabolism; CTP biosynthesis via de novo pathway; CTP from UDP: step 2/2. With respect to regulation, allosterically activated by GTP, when glutamine is the substrate; GTP has no effect on the reaction when ammonia is the substrate. The allosteric effector GTP functions by stabilizing the protein conformation that binds the tetrahedral intermediate(s) formed during glutamine hydrolysis. Inhibited by the product CTP, via allosteric rather than competitive inhibition. Functionally, catalyzes the ATP-dependent amination of UTP to CTP with either L-glutamine or ammonia as the source of nitrogen. Regulates intracellular CTP levels through interactions with the four ribonucleotide triphosphates. The polypeptide is CTP synthase (Rhodospirillum centenum (strain ATCC 51521 / SW)).